The primary structure comprises 198 residues: Putative pseudouridine methyltransferase (198 aa).

S-adenosyl-L-methionine-binding residues include methionine 132 and cysteine 186.

This sequence belongs to the methyltransferase superfamily. TrmY family.

It is found in the cytoplasm. The sequence is that of Putative pseudouridine methyltransferase from Shewanella baltica (strain OS185).